The sequence spans 296 residues: Mycothiol acetyltransferase (296 aa).

2 consecutive N-acetyltransferase domains span residues 17-146 (YNHR…AVYD) and 156-296 (LKTA…VYEK). Glu-44 lines the 1D-myo-inositol 2-(L-cysteinylamino)-2-deoxy-alpha-D-glucopyranoside pocket. 81–83 (LAV) serves as a coordination point for acetyl-CoA. Residues Glu-183, Lys-222, and Glu-230 each contribute to the 1D-myo-inositol 2-(L-cysteinylamino)-2-deoxy-alpha-D-glucopyranoside site. Acetyl-CoA contacts are provided by residues 234–236 (VGL) and 241–247 (RGKGLGD). A 1D-myo-inositol 2-(L-cysteinylamino)-2-deoxy-alpha-D-glucopyranoside-binding site is contributed by Tyr-268.

The protein belongs to the acetyltransferase family. MshD subfamily. Monomer.

The enzyme catalyses 1D-myo-inositol 2-(L-cysteinylamino)-2-deoxy-alpha-D-glucopyranoside + acetyl-CoA = mycothiol + CoA + H(+). Catalyzes the transfer of acetyl from acetyl-CoA to desacetylmycothiol (Cys-GlcN-Ins) to form mycothiol. This is Mycothiol acetyltransferase from Corynebacterium efficiens (strain DSM 44549 / YS-314 / AJ 12310 / JCM 11189 / NBRC 100395).